We begin with the raw amino-acid sequence, 172 residues long: MRNLILVGPMGAGKSTIGRLLAKELRLPFKDSDKEIELRTGANIPWIFDKEGEPGFREREQAMIAELCEADGVVLATGGGAVMRTENRQALRAGGRVVYLHASIEQQVGRTARDRNRPLLRTADPARVLSELLAIRDPLYREIADVVIETDERPPRMVVLEILARLAELPPR.

11 to 16 (GAGKST) is a binding site for ATP. Ser15 serves as a coordination point for Mg(2+). Substrate-binding residues include Asp33, Arg57, and Gly79. An ATP-binding site is contributed by Arg117. Arg136 contacts substrate. Arg153 lines the ATP pocket.

It belongs to the shikimate kinase family. In terms of assembly, monomer. It depends on Mg(2+) as a cofactor.

The protein localises to the cytoplasm. The enzyme catalyses shikimate + ATP = 3-phosphoshikimate + ADP + H(+). It functions in the pathway metabolic intermediate biosynthesis; chorismate biosynthesis; chorismate from D-erythrose 4-phosphate and phosphoenolpyruvate: step 5/7. Catalyzes the specific phosphorylation of the 3-hydroxyl group of shikimic acid using ATP as a cosubstrate. The polypeptide is Shikimate kinase (Pseudomonas syringae pv. tomato (strain ATCC BAA-871 / DC3000)).